Here is a 222-residue protein sequence, read N- to C-terminus: Large ribosomal subunit protein uL4 (222 aa).

Residues 67–87 (QKGTGNARAGSKRTNVRRGGG) are disordered.

The protein belongs to the universal ribosomal protein uL4 family. Part of the 50S ribosomal subunit.

Its function is as follows. One of the primary rRNA binding proteins, this protein initially binds near the 5'-end of the 23S rRNA. It is important during the early stages of 50S assembly. It makes multiple contacts with different domains of the 23S rRNA in the assembled 50S subunit and ribosome. Forms part of the polypeptide exit tunnel. This chain is Large ribosomal subunit protein uL4, found in Rhodopirellula baltica (strain DSM 10527 / NCIMB 13988 / SH1).